A 1029-amino-acid polypeptide reads, in one-letter code: Ig-like and fibronectin type-III domain-containing protein 1 (1029 aa).

The N-terminal stretch at 1–22 is a signal peptide; that stretch reads MCNVAEDPSSFSTITIATTCRA. Over 23 to 918 the chain is Extracellular; that stretch reads EWPKVSPCIA…RRSASKGSSS (896 aa). Residues asparagine 36, asparagine 93, asparagine 120, and asparagine 165 are each glycosylated (N-linked (GlcNAc...) asparagine). Positions 90 to 181 constitute a Fibronectin type-III 1 domain; sequence APGNVTISEL…TAKLFSTLPT (92 aa). The WR1 domain occupies 185-227; that stretch reads PLCTIGEPIYMNDGRVMICDAVNPCPNGFRCTGAGSDLSYCCP. N-linked (GlcNAc...) asparagine glycans are attached at residues asparagine 257, asparagine 374, asparagine 409, asparagine 442, asparagine 482, asparagine 507, and asparagine 552. 2 consecutive Fibronectin type-III domains span residues 330-417 and 427-523; these read AVRN…TKPA and APEK…AQKD. In terms of domain architecture, Ig-like C2-type spans 619–710; the sequence is ASVTMKKDKI…SRVEASSEVI (92 aa). Cysteines 640 and 693 form a disulfide. N-linked (GlcNAc...) asparagine glycosylation is present at asparagine 753. A Fibronectin type-III 4 domain is found at 817 to 909; sequence APSEVSNVRI…SAIPKDSEPR (93 aa). A helical transmembrane segment spans residues 919 to 939; that stretch reads AFWIVVILVVFGVLIAGLAVL. The Cytoplasmic portion of the chain corresponds to 940 to 1029; the sequence is SKRRELPYPI…NGMRYAKLET (90 aa). The disordered stretch occupies residues 988–1021; it reads SATTGTAAATQSEWQSANLEANSTTDNSHEYRNG. A compositionally biased stretch (polar residues) spans 998 to 1013; that stretch reads QSEWQSANLEANSTTD.

The protein localises to the cell membrane. The sequence is that of Ig-like and fibronectin type-III domain-containing protein 1 from Caenorhabditis elegans.